Consider the following 71-residue polypeptide: MPVIKVRENEPFDVALRRFKRSCEKAGILAEVRRREFYEKPTTERKRAKASAVKRHAKKLARENARRTRLY.

The tract at residues 43 to 71 (TERKRAKASAVKRHAKKLARENARRTRLY) is disordered. Basic residues predominate over residues 46 to 59 (KRAKASAVKRHAKK). A compositionally biased stretch (basic and acidic residues) spans 60–71 (LARENARRTRLY).

Belongs to the bacterial ribosomal protein bS21 family.

This Edwardsiella ictaluri (strain 93-146) protein is Small ribosomal subunit protein bS21.